Reading from the N-terminus, the 360-residue chain is Transcriptional coactivator MYCFIDRAFT_190109 (360 aa).

In terms of domain architecture, HTH iclR-type spans Gly-3 to Gln-67. Positions Ala-33–Arg-52 form a DNA-binding region, H-T-H motif.

It localises to the nucleus. Functionally, transcriptional coactivator; part of the gene cluster that mediates the biosynthesis of an emodin derivative that may be involved in black Sigatoka disease of banana. With MYCFIDRAFT_198930, coregulates the production of the PKS8-1 cluster product. This is Transcriptional coactivator MYCFIDRAFT_190109 from Pseudocercospora fijiensis (strain CIRAD86) (Black leaf streak disease fungus).